A 138-amino-acid chain; its full sequence is Large ribosomal subunit protein uL16 (138 aa).

Belongs to the universal ribosomal protein uL16 family. In terms of assembly, part of the 50S ribosomal subunit.

Functionally, binds 23S rRNA and is also seen to make contacts with the A and possibly P site tRNAs. The sequence is that of Large ribosomal subunit protein uL16 from Acholeplasma laidlawii (strain PG-8A).